Consider the following 425-residue polypeptide: Protein-glutamate methylesterase/protein-glutamine glutaminase (425 aa).

The Response regulatory domain maps to 22 to 140 (RVMVVDDSVV…EVAAADIFRH (119 aa)). D73 carries the 4-aspartylphosphate modification. Disordered regions lie at residues 150 to 174 (AAKRRRPATVASPPPDHDDYGSNAS) and 203 to 223 (VQREQQPRSAQAARAMSRPQP). The 197-residue stretch at 221–417 (PQPTLRSFSA…PLQQIAPKLV (197 aa)) folds into the CheB-type methylesterase domain. Catalysis depends on residues S241, H269, and D365.

Belongs to the CheB family. Phosphorylated by CheA. Phosphorylation of the N-terminal regulatory domain activates the methylesterase activity.

It is found in the cytoplasm. It catalyses the reaction [protein]-L-glutamate 5-O-methyl ester + H2O = L-glutamyl-[protein] + methanol + H(+). It carries out the reaction L-glutaminyl-[protein] + H2O = L-glutamyl-[protein] + NH4(+). Its function is as follows. Involved in chemotaxis. Part of a chemotaxis signal transduction system that modulates chemotaxis in response to various stimuli. Catalyzes the demethylation of specific methylglutamate residues introduced into the chemoreceptors (methyl-accepting chemotaxis proteins or MCP) by CheR. Also mediates the irreversible deamidation of specific glutamine residues to glutamic acid. The chain is Protein-glutamate methylesterase/protein-glutamine glutaminase from Nitrobacter winogradskyi (strain ATCC 25391 / DSM 10237 / CIP 104748 / NCIMB 11846 / Nb-255).